Reading from the N-terminus, the 91-residue chain is PqqA binding protein (91 aa).

The protein belongs to the PqqD family. As to quaternary structure, monomer. Interacts with PqqE.

The protein operates within cofactor biosynthesis; pyrroloquinoline quinone biosynthesis. In terms of biological role, functions as a PqqA binding protein and presents PqqA to PqqE, in the pyrroloquinoline quinone (PQQ) biosynthetic pathway. The sequence is that of PqqA binding protein from Pseudomonas fluorescens (strain ATCC BAA-477 / NRRL B-23932 / Pf-5).